Reading from the N-terminus, the 203-residue chain is Corrinoid adenosyltransferase (203 aa).

Positions 1-21 (MNESPEKDQRHRERMERKKAV) are disordered. ATP is bound at residue 41-47 (GNGKGKS).

It belongs to the Cob(I)alamin adenosyltransferase family. Monomer. It depends on Mn(2+) as a cofactor.

The protein resides in the cytoplasm. It carries out the reaction 2 cob(II)yrinate a,c diamide + reduced [electron-transfer flavoprotein] + 2 ATP = 2 adenosylcob(III)yrinate a,c-diamide + 2 triphosphate + oxidized [electron-transfer flavoprotein] + 3 H(+). The enzyme catalyses 2 cob(II)alamin + reduced [electron-transfer flavoprotein] + 2 ATP = 2 adenosylcob(III)alamin + 2 triphosphate + oxidized [electron-transfer flavoprotein] + 3 H(+). It participates in cofactor biosynthesis; adenosylcobalamin biosynthesis; adenosylcobalamin from cob(II)yrinate a,c-diamide: step 2/7. Its function is as follows. Required for both de novo synthesis of the corrin ring for the assimilation of exogenous corrinoids. Participates in the adenosylation of a variety of incomplete and complete corrinoids. In Pseudomonas aeruginosa (strain ATCC 15692 / DSM 22644 / CIP 104116 / JCM 14847 / LMG 12228 / 1C / PRS 101 / PAO1), this protein is Corrinoid adenosyltransferase (cobO).